The following is a 361-amino-acid chain: Histidinol-phosphate aminotransferase (361 aa).

An N6-(pyridoxal phosphate)lysine modification is found at K224.

This sequence belongs to the class-II pyridoxal-phosphate-dependent aminotransferase family. Histidinol-phosphate aminotransferase subfamily. Homodimer. Pyridoxal 5'-phosphate is required as a cofactor.

The catalysed reaction is L-histidinol phosphate + 2-oxoglutarate = 3-(imidazol-4-yl)-2-oxopropyl phosphate + L-glutamate. The protein operates within amino-acid biosynthesis; L-histidine biosynthesis; L-histidine from 5-phospho-alpha-D-ribose 1-diphosphate: step 7/9. This chain is Histidinol-phosphate aminotransferase, found in Bacillus licheniformis (strain ATCC 14580 / DSM 13 / JCM 2505 / CCUG 7422 / NBRC 12200 / NCIMB 9375 / NCTC 10341 / NRRL NRS-1264 / Gibson 46).